A 369-amino-acid polypeptide reads, in one-letter code: 3-methylarginine biosynthesis aminotransferase ArgM (369 aa).

Lys216 is modified (N6-(pyridoxal phosphate)lysine).

It belongs to the class-I pyridoxal-phosphate-dependent aminotransferase family. Pyridoxal 5'-phosphate is required as a cofactor.

It carries out the reaction L-arginine + 2-oxoglutarate = 5-guanidino-2-oxopentanoate + L-glutamate. The catalysed reaction is (3R)-5-guanidino-3-methyl-2-oxopentanoate + L-aspartate = (3R)-3-methyl-L-arginine + oxaloacetate. Its pathway is antibiotic biosynthesis. Its function is as follows. Aminotransferase involved in the formation of the rare amino acid 3-methylarginine (MeArg), which is incorporated into the peptidyl nucleoside antibiotic arginomycin. Catalyzes two rounds of transamination: the transfer of the amino group from L-arginine to 2-oxoglutarate to give glutamate and 5-guanidino-2-oxopentanoic acid, which will be methylated by ArgN. Then, ArgM specifically catalyzes transamination from the donor L-aspartate to the 5-guanidino-3-methyl-2-oxopentanoic acid produced by ArgN, generating the final product, 3-methylarginine. Cannot use arginine analogs, such as D-arginine, L-homoarginine and N-methylarginine for the first transamination. The chain is 3-methylarginine biosynthesis aminotransferase ArgM from Streptomyces arginensis.